A 102-amino-acid polypeptide reads, in one-letter code: Small ribosomal subunit protein uS10 (102 aa).

It belongs to the universal ribosomal protein uS10 family. Part of the 30S ribosomal subunit.

Involved in the binding of tRNA to the ribosomes. This chain is Small ribosomal subunit protein uS10, found in Pyrococcus horikoshii (strain ATCC 700860 / DSM 12428 / JCM 9974 / NBRC 100139 / OT-3).